A 252-amino-acid chain; its full sequence is tRNA uridine(34) hydroxylase (252 aa).

One can recognise a Rhodanese domain in the interval 129-223 (QGRPVVMLDT…YFEETGGKGF (95 aa)). The Cysteine persulfide intermediate role is filled by C183.

This sequence belongs to the TrhO family.

The catalysed reaction is uridine(34) in tRNA + AH2 + O2 = 5-hydroxyuridine(34) in tRNA + A + H2O. Catalyzes oxygen-dependent 5-hydroxyuridine (ho5U) modification at position 34 in tRNAs. The protein is tRNA uridine(34) hydroxylase of Bordetella petrii (strain ATCC BAA-461 / DSM 12804 / CCUG 43448).